Reading from the N-terminus, the 329-residue chain is NAD kinase (329 aa).

The interval 1 to 26 is disordered; that stretch reads MTTPGTDHNADQGADSGDKATKAASG. The active-site Proton acceptor is the D104. NAD(+) is bound by residues 104–105, R109, 179–180, D209, and 220–225; these read DG, NE, and TAYAFS.

The protein belongs to the NAD kinase family. A divalent metal cation is required as a cofactor.

Its subcellular location is the cytoplasm. The catalysed reaction is NAD(+) + ATP = ADP + NADP(+) + H(+). Functionally, involved in the regulation of the intracellular balance of NAD and NADP, and is a key enzyme in the biosynthesis of NADP. Catalyzes specifically the phosphorylation on 2'-hydroxyl of the adenosine moiety of NAD to yield NADP. This Corynebacterium jeikeium (strain K411) protein is NAD kinase.